The sequence spans 152 residues: RxLR effector protein Avrblb1 (152 aa).

The N-terminal stretch at M1–S24 is a signal peptide. Residues R51–R72 carry the RxLR-dEER motif. The RGD RLK-binding motif motif lies at R54–D56. A glycan (N-linked (GlcNAc...) asparagine) is linked at N66. The segment at Q99 to S152 is w motif.

Belongs to the RxLR effector family. In terms of assembly, interacts with host defense protein RGA2/Rpi-blb1. Interacts with host legume-type lectin receptor kinase LECRK19.

The protein localises to the secreted. It localises to the host nucleus. Its subcellular location is the host nucleolus. The protein resides in the host cell membrane. Functionally, secreted effector that acts as an elicitor of hypersensitive response (HR) specifically on plants carrying defense protein RGA2/Rpi-blb1. Enhances P.infestans colonization of plant hosts Nicotiana benthamiana and potato Solanum bulbocastanum leaves. Associates with host legume-type lectin receptor kinases and disrupts attachments between the host plasma membrane and cell wall. The protein is RxLR effector protein Avrblb1 of Phytophthora infestans (strain T30-4) (Potato late blight agent).